The following is an 84-amino-acid chain: Small ribosomal subunit protein uS17 (84 aa).

Belongs to the universal ribosomal protein uS17 family. Part of the 30S ribosomal subunit.

In terms of biological role, one of the primary rRNA binding proteins, it binds specifically to the 5'-end of 16S ribosomal RNA. The protein is Small ribosomal subunit protein uS17 of Clostridium kluyveri (strain NBRC 12016).